An 877-amino-acid polypeptide reads, in one-letter code: GTPase activating protein homolog 2 (877 aa).

An F-BAR domain is found at 14-285 (FKFTDNLWDG…SVEMIDITND (272 aa)). Positions 130–214 (QEGIKLKQDM…SNCDEEYREQ (85 aa)) form a coiled coil. The Rho-GAP domain maps to 374 to 560 (VSLDELMNRQ…TLIKQIPPPL (187 aa)). Disordered stretches follow at residues 589-612 (DQLS…GSGS), 644-704 (LPPL…AEPT), and 749-800 (AATP…LAST). 3 stretches are compositionally biased toward low complexity: residues 593–612 (NDDN…GSGS), 653–676 (SGSG…SPTT), and 749–779 (AATP…STST). Positions 780–800 (IKTSSPDRTTPLTSSPPLAST) are enriched in polar residues.

The protein resides in the cytoplasm. Its subcellular location is the contractile vacuole. Functionally, rho GTPase-activating protein involved in the signal transduction pathway. Regulator of the contractile vacuole network as well as involved in driving vacuole emptying. The protein is GTPase activating protein homolog 2 (mgp2) of Dictyostelium discoideum (Social amoeba).